Consider the following 766-residue polypeptide: 5-methyltetrahydropteroyltriglutamate--homocysteine methyltransferase (766 aa).

Residues 16–19 (RELK) and Lys-124 contribute to the 5-methyltetrahydropteroyltri-L-glutamate site. L-homocysteine-binding positions include 445 to 447 (IGS) and Glu-498. L-methionine-binding positions include 445–447 (IGS) and Glu-498. 5-methyltetrahydropteroyltri-L-glutamate-binding positions include 529 to 530 (RC) and Trp-575. Asp-613 contributes to the L-homocysteine binding site. Asp-613 provides a ligand contact to L-methionine. A 5-methyltetrahydropteroyltri-L-glutamate-binding site is contributed by Glu-619. The Zn(2+) site is built by His-655, Cys-657, and Glu-679. His-708 serves as the catalytic Proton donor. Position 740 (Cys-740) interacts with Zn(2+).

The protein belongs to the vitamin-B12 independent methionine synthase family. Zn(2+) serves as cofactor.

It carries out the reaction 5-methyltetrahydropteroyltri-L-glutamate + L-homocysteine = tetrahydropteroyltri-L-glutamate + L-methionine. It participates in amino-acid biosynthesis; L-methionine biosynthesis via de novo pathway; L-methionine from L-homocysteine (MetE route): step 1/1. In terms of biological role, catalyzes the transfer of a methyl group from 5-methyltetrahydrofolate to homocysteine resulting in methionine formation. The polypeptide is 5-methyltetrahydropteroyltriglutamate--homocysteine methyltransferase (Pseudomonas syringae pv. tomato (strain ATCC BAA-871 / DC3000)).